Consider the following 21-residue polypeptide: Peptide PGLa-R3 (21 aa).

L21 carries the post-translational modification Leucine amide.

Expressed by the skin glands.

The protein resides in the secreted. Functionally, antimicrobial peptide. The sequence is that of Peptide PGLa-R3 from Xenopus ruwenzoriensis (Uganda clawed frog).